Consider the following 270-residue polypeptide: Myelin protein zero-like protein 1 (270 aa).

The N-terminal stretch at 1-35 (MAEAVGAVALIAAPARRRWLWSVLAAMLGLLTARI) is a signal peptide. Positions 36–151 (SALEVHTPKE…DIVVRPGHIR (116 aa)) constitute an Ig-like V-type domain. At 36–162 (SALEVHTPKE…HVVEIDNLLV (127 aa)) the chain is on the extracellular side. N-linked (GlcNAc...) asparagine glycosylation is found at asparagine 50 and asparagine 130. A disulfide bridge connects residues cysteine 58 and cysteine 135. Residues 163 to 183 (FLVWVVVGTVTAVVLGLTLLI) form a helical membrane-spanning segment. The Cytoplasmic portion of the chain corresponds to 184–270 (SLVLVVLYRR…SVVYADIRKD (87 aa)). Residues 201–257 (TGCSTSERLSPVKQAPRKCPSDTEGLVKSPPSAGSHQGPVIYAQLDHSGGHHSGKIN) are disordered. Serine 204, serine 206, serine 210, and serine 221 each carry phosphoserine. Positions 240 to 245 (VIYAQL) match the ITIM motif 1 motif. Tyrosine 242 carries the phosphotyrosine modification. Serine 261 is subject to Phosphoserine. Positions 262–267 (VVYADI) match the ITIM motif 2 motif. Phosphotyrosine is present on tyrosine 264.

It belongs to the myelin P0 protein family. Interacts with phosphorylated PTPN11/SHP-2. In terms of processing, phosphorylated on tyrosine residues upon stimulation with pervanadate and concanavalin-A (ConA). Phosphorylation at Tyr-242 and Tyr-264 is required for interaction with PTPN11/SHP-2. Dephosphorylated by PTPN11/SHP-2 (in vitro).

It localises to the membrane. Functionally, cell surface receptor, which is involved in signal transduction processes. Recruits PTPN11/SHP-2 to the cell membrane and is a putative substrate of PTPN11/SHP-2. Is a major receptor for concanavalin-A (ConA) and is involved in cellular signaling induced by ConA, which probably includes Src family tyrosine-protein kinases. Isoform 2 seems to have a dominant negative role; it blocks tyrosine phosphorylation of MPZL1 induced by ConA. Isoform 1, but not isoform 2, may be involved in regulation of integrin-mediated cell motility. The chain is Myelin protein zero-like protein 1 (Mpzl1) from Mus musculus (Mouse).